The chain runs to 368 residues: H-2 class I histocompatibility antigen, K-D alpha chain (368 aa).

An N-terminal signal peptide occupies residues 1 to 21 (MAPCTLLLLLAAALAPTQTRA). The segment at 22-111 (GPHSLRYFVT…AQRYYNQSKG (90 aa)) is alpha-1. Over 22–305 (GPHSLRYFVT…KLPPSTVSNT (284 aa)) the chain is Extracellular. N107 carries N-linked (GlcNAc...) asparagine glycosylation. Residues 112 to 203 (GSHTFQRMFG…ELGNETLLRT (92 aa)) are alpha-2. C122 and C185 are joined by a disulfide. 2 N-linked (GlcNAc...) asparagine glycosylation sites follow: N197 and N277. An alpha-3 region spans residues 204 to 295 (DSPKAHVTYH…GLPEPLTLRW (92 aa)). The Ig-like C1-type domain maps to 206-294 (PKAHVTYHPR…KGLPEPLTLR (89 aa)). C224 and C280 form a disulfide bridge. Residues 296-305 (KLPPSTVSNT) form a connecting peptide region. Residues 306–328 (VIIAVLVVLGAAIVTGAVVAFVM) form a helical membrane-spanning segment. Residues 329 to 368 (KMRRNTGGKGVNYALAPGSQTSDLSLPDGKVMVHDPHSLA) lie on the Cytoplasmic side of the membrane. 2 positions are modified to phosphoserine: S350 and S353.

Belongs to the MHC class I family. Heterodimer of an alpha chain and a beta chain (beta-2-microglobulin).

Its subcellular location is the membrane. Functionally, involved in the presentation of foreign antigens to the immune system. The chain is H-2 class I histocompatibility antigen, K-D alpha chain (H2-K1) from Mus musculus (Mouse).